Here is a 32-residue protein sequence, read N- to C-terminus: RADTQTYQPYNKDWIKEKIYVLLRRQAQQAGK.

This sequence belongs to the E(R) family. In terms of assembly, homodimer. Component of the methylosome, a 20S complex containing at least CLNS1A/pICln, PRMT5/SKB1, WDR77/MEP50, PRMT1 and ERH. Interacts with CHTOP.

The protein localises to the nucleus. May have a role in the cell cycle. Its function is as follows. AP 3910 has antibacterial activity against B.megaterium. This chain is Enhancer of rudimentary homolog (ERH), found in Sus scrofa (Pig).